The following is a 212-amino-acid chain: MTSYSSATARAEMSELRRLKSLLPPELQSWVMVEGSTEVNPPLIRSEELGRDEIEIQVDLAKWENLAIDQRNLLFWHEVARIQSDTIPREGWEMAALAIGLGGAVGELWVQDGLLLLLALGLCGISGYRLWQKNNGEKRIKEAIEADEKAITLATRFGYTLPNAYKSLGSAFKTLIEQTPNRRQRKQYETRLQALRQSAAKMKAKTQKAKAL.

Residues 109 to 131 (WVQDGLLLLLALGLCGISGYRLW) form a helical membrane-spanning segment. The stretch at 180-212 (PNRRQRKQYETRLQALRQSAAKMKAKTQKAKAL) forms a coiled coil.

The protein localises to the cellular thylakoid membrane. This chain is Thylakoid membrane protein slr1949, found in Synechocystis sp. (strain ATCC 27184 / PCC 6803 / Kazusa).